We begin with the raw amino-acid sequence, 329 residues long: GTPase Obg (329 aa).

Positions 1-159 (MQFIDEAKIF…MWVWLHLKLL (159 aa)) constitute an Obg domain. In terms of domain architecture, OBG-type G spans 160–327 (SDVGLVGLPN…LLANILSELQ (168 aa)). Residues 166–173 (GLPNAGKS), 191–195 (FTTLT), 212–215 (DIPG), 279–282 (TKTD), and 308–310 (SSY) contribute to the GTP site. The Mg(2+) site is built by Ser-173 and Thr-193.

This sequence belongs to the TRAFAC class OBG-HflX-like GTPase superfamily. OBG GTPase family. As to quaternary structure, monomer. The cofactor is Mg(2+).

Its subcellular location is the cytoplasm. In terms of biological role, an essential GTPase which binds GTP, GDP and possibly (p)ppGpp with moderate affinity, with high nucleotide exchange rates and a fairly low GTP hydrolysis rate. Plays a role in control of the cell cycle, stress response, ribosome biogenesis and in those bacteria that undergo differentiation, in morphogenesis control. The chain is GTPase Obg from Orientia tsutsugamushi (strain Boryong) (Rickettsia tsutsugamushi).